We begin with the raw amino-acid sequence, 445 residues long: Xylose isomerase (445 aa).

Catalysis depends on residues His107 and Asp110. Glu238, Glu274, His277, Asp302, Asp313, Asp315, and Asp345 together coordinate Mg(2+).

It belongs to the xylose isomerase family. Homotetramer. Mg(2+) serves as cofactor.

It is found in the cytoplasm. It catalyses the reaction alpha-D-xylose = alpha-D-xylulofuranose. This is Xylose isomerase (xylA) from Priestia megaterium (strain DSM 319 / IMG 1521) (Bacillus megaterium).